The sequence spans 384 residues: Probable RNA 3'-terminal phosphate cyclase-like protein (384 aa).

It belongs to the RNA 3'-terminal cyclase family. Type 2 subfamily. As to quaternary structure, part of the small subunit (SSU) processome, composed of more than 70 proteins and the RNA chaperone small nucleolar RNA (snoRNA) U3.

The protein localises to the nucleus. It localises to the nucleolus. Its function is as follows. Part of the small subunit (SSU) processome, first precursor of the small eukaryotic ribosomal subunit. During the assembly of the SSU processome in the nucleolus, many ribosome biogenesis factors, an RNA chaperone and ribosomal proteins associate with the nascent pre-rRNA and work in concert to generate RNA folding, modifications, rearrangements and cleavage as well as targeted degradation of pre-ribosomal RNA by the RNA exosome. Does not have cyclase activity. This Drosophila melanogaster (Fruit fly) protein is Probable RNA 3'-terminal phosphate cyclase-like protein (Rtc1).